A 408-amino-acid polypeptide reads, in one-letter code: Acetate kinase (408 aa).

Asparagine 10 is a binding site for Mg(2+). Residue lysine 17 coordinates ATP. Arginine 96 lines the substrate pocket. The Proton donor/acceptor role is filled by aspartate 153. ATP contacts are provided by residues 213 to 217 (HLGNG) and 288 to 290 (DLR). Glutamate 393 contacts Mg(2+).

Belongs to the acetokinase family. In terms of assembly, homodimer. The cofactor is Mg(2+). Mn(2+) is required as a cofactor.

Its subcellular location is the cytoplasm. It carries out the reaction acetate + ATP = acetyl phosphate + ADP. The protein operates within metabolic intermediate biosynthesis; acetyl-CoA biosynthesis; acetyl-CoA from acetate: step 1/2. Its function is as follows. Catalyzes the formation of acetyl phosphate from acetate and ATP. Can also catalyze the reverse reaction. The protein is Acetate kinase of Borrelia recurrentis (strain A1).